The chain runs to 215 residues: 3,4-dihydroxy-2-butanone 4-phosphate synthase (215 aa).

D-ribulose 5-phosphate is bound by residues Arg-38–Glu-39, Asp-43, Arg-151–Thr-155, and Glu-175. Glu-39 serves as a coordination point for Mg(2+). His-154 provides a ligand contact to Mg(2+).

The protein belongs to the DHBP synthase family. As to quaternary structure, homodimer. It depends on Mg(2+) as a cofactor. Mn(2+) serves as cofactor.

It carries out the reaction D-ribulose 5-phosphate = (2S)-2-hydroxy-3-oxobutyl phosphate + formate + H(+). It participates in cofactor biosynthesis; riboflavin biosynthesis; 2-hydroxy-3-oxobutyl phosphate from D-ribulose 5-phosphate: step 1/1. Catalyzes the conversion of D-ribulose 5-phosphate to formate and 3,4-dihydroxy-2-butanone 4-phosphate. This Haemophilus influenzae (strain ATCC 51907 / DSM 11121 / KW20 / Rd) protein is 3,4-dihydroxy-2-butanone 4-phosphate synthase.